The primary structure comprises 503 residues: 11-hydroxysugiol 20-monooxygenase (503 aa).

A helical membrane pass occupies residues 2-22 (QVLIVASLAFLAAWLVYSRWS). Cysteine 446 lines the heme pocket.

The protein belongs to the cytochrome P450 family. Heme is required as a cofactor. Highly expressed in roots.

The protein resides in the membrane. The catalysed reaction is 11-hydroxysugiol + reduced [NADPH--hemoprotein reductase] + O2 = 11,20-dihydroxysugiol + oxidized [NADPH--hemoprotein reductase] + H2O + H(+). It catalyses the reaction 11-hydroxyferruginol + reduced [NADPH--hemoprotein reductase] + O2 = 11,20-dihydroxyferruginol + oxidized [NADPH--hemoprotein reductase] + H2O + H(+). Its pathway is secondary metabolite biosynthesis; terpenoid biosynthesis. In terms of biological role, monooxygenase that oxidizes 11-hydroxysugiol to produce 11,20-dihydroxysugiol. Can oxidize 11-hydroxyferruginol to produce 11,20-dihydroxyferruginol. These products are intermediates in tanshinone biosynthesis. This chain is 11-hydroxysugiol 20-monooxygenase, found in Salvia miltiorrhiza (Chinese sage).